A 43-amino-acid polypeptide reads, in one-letter code: Protein PsbN (43 aa).

Residues Ile7–Pro29 traverse the membrane as a helical segment.

Belongs to the PsbN family.

Its subcellular location is the plastid. It is found in the chloroplast thylakoid membrane. May play a role in photosystem I and II biogenesis. The sequence is that of Protein PsbN from Phaeodactylum tricornutum (strain CCAP 1055/1).